The chain runs to 137 residues: MADRGIFLYPFRRFQEWSRSTALIDWMESNNSHIFKINVPGYNKEDIKVQIEEGNVLSIRGEGIKEEKKENLVWHVAEREAFSGGGSEFLRRIELPENVKVDQVKAYVENGVLTVVVPKDTSSKSSKVRNVNITSKL.

One can recognise a sHSP domain in the interval 15-134 (QEWSRSTALI…SSKVRNVNIT (120 aa)). The Microbody targeting signal motif lies at 135–137 (SKL).

The protein belongs to the small heat shock protein (HSP20) family. May form oligomeric structures.

It localises to the peroxisome. Its function is as follows. Possesses chaperone activity. In Arabidopsis thaliana (Mouse-ear cress), this protein is 15.7 kDa heat shock protein, peroxisomal (HSP15.7).